A 128-amino-acid chain; its full sequence is Glycine cleavage system H protein (128 aa).

Positions 24–106 (LVRIGISEFA…HGEGWLLIIR (83 aa)) constitute a Lipoyl-binding domain. Lys65 is subject to N6-lipoyllysine.

This sequence belongs to the GcvH family. In terms of assembly, the glycine cleavage system is composed of four proteins: P, T, L and H. It depends on (R)-lipoate as a cofactor.

Functionally, the glycine cleavage system catalyzes the degradation of glycine. The H protein shuttles the methylamine group of glycine from the P protein to the T protein. The sequence is that of Glycine cleavage system H protein from Prochlorococcus marinus (strain NATL2A).